We begin with the raw amino-acid sequence, 905 residues long: Alanine--tRNA ligase (905 aa).

Residues histidine 582, histidine 586, cysteine 687, and histidine 691 each contribute to the Zn(2+) site.

This sequence belongs to the class-II aminoacyl-tRNA synthetase family. It depends on Zn(2+) as a cofactor.

The protein resides in the cytoplasm. The enzyme catalyses tRNA(Ala) + L-alanine + ATP = L-alanyl-tRNA(Ala) + AMP + diphosphate. Functionally, catalyzes the attachment of alanine to tRNA(Ala) in a two-step reaction: alanine is first activated by ATP to form Ala-AMP and then transferred to the acceptor end of tRNA(Ala). Also edits incorrectly charged Ser-tRNA(Ala) and Gly-tRNA(Ala) via its editing domain. The chain is Alanine--tRNA ligase from Mycoplasma mobile (strain ATCC 43663 / 163K / NCTC 11711) (Mesomycoplasma mobile).